The primary structure comprises 227 residues: Probable cytokinin riboside 5'-monophosphate phosphoribohydrolase LOGL9 (227 aa).

Residues 1-15 (MYISSPHTSHFTSID) are compositionally biased toward polar residues. Residues 1–26 (MYISSPHTSHFTSIDRSPAVVSESDR) form a disordered region. Substrate-binding positions include Glu117, 135–136 (RK), and 152–158 (GYGTLEE).

Belongs to the LOG family. Expressed in roots, leaves and stems.

It catalyses the reaction N(6)-(dimethylallyl)adenosine 5'-phosphate + H2O = N(6)-dimethylallyladenine + D-ribose 5-phosphate. The catalysed reaction is 9-ribosyl-trans-zeatin 5'-phosphate + H2O = trans-zeatin + D-ribose 5-phosphate. In terms of biological role, cytokinin-activating enzyme working in the direct activation pathway. Phosphoribohydrolase that converts inactive cytokinin nucleotides to the biologically active free-base forms. The chain is Probable cytokinin riboside 5'-monophosphate phosphoribohydrolase LOGL9 (LOGL9) from Oryza sativa subsp. japonica (Rice).